Here is a 141-residue protein sequence, read N- to C-terminus: Nucleoside diphosphate kinase (141 aa).

Residues Lys-11, Phe-59, Arg-87, Thr-93, Arg-104, and Asn-114 each contribute to the ATP site. Residue His-117 is the Pros-phosphohistidine intermediate of the active site.

The protein belongs to the NDK family. In terms of assembly, homotetramer. The cofactor is Mg(2+).

The protein localises to the cytoplasm. The enzyme catalyses a 2'-deoxyribonucleoside 5'-diphosphate + ATP = a 2'-deoxyribonucleoside 5'-triphosphate + ADP. It carries out the reaction a ribonucleoside 5'-diphosphate + ATP = a ribonucleoside 5'-triphosphate + ADP. In terms of biological role, major role in the synthesis of nucleoside triphosphates other than ATP. The ATP gamma phosphate is transferred to the NDP beta phosphate via a ping-pong mechanism, using a phosphorylated active-site intermediate. This is Nucleoside diphosphate kinase from Laribacter hongkongensis (strain HLHK9).